Reading from the N-terminus, the 650-residue chain is Epithelial sodium channel subunit beta (650 aa).

Residues 1-95 (MLLHINPAYL…IICEGPKKKA (95 aa)) lie on the Cytoplasmic side of the membrane. Residues 96–116 (MWFLLTLLFTALVCWQWGIFI) traverse the membrane as a helical segment. Residues 117–542 (RTYLSWEVSV…GGQFGFWMGG (426 aa)) lie on the Extracellular side of the membrane. Intrachain disulfides connect cysteine 143/cysteine 317, cysteine 229/cysteine 234, cysteine 241/cysteine 248, cysteine 294/cysteine 301, and cysteine 406/cysteine 458. The N-linked (GlcNAc...) asparagine glycan is linked to asparagine 244. Asparagine 305 carries an N-linked (GlcNAc...) asparagine glycan. A helical membrane pass occupies residues 543–563 (SVLCLIEFGEIIIDFVWITII). Residues 564–650 (KLVALAKSLR…IESDSEGDAI (87 aa)) lie on the Cytoplasmic side of the membrane. A disordered region spans residues 600 to 650 (FQPDTAPRSPNTGPYPNEQALPIPGTPPPNYDSLRLQPLDVIESDSEGDAI). A PY motif; recruits WW domain-containing proteins and is thereby required for ubiquitination and inhibition of the channel by NEDD4 and NEDD4L motif is present at residues 626 to 630 (PPPNY). Residues 641 to 650 (IESDSEGDAI) are compositionally biased toward acidic residues. 2 positions are modified to phosphoserine: serine 643 and serine 645.

The protein belongs to the amiloride-sensitive sodium channel (TC 1.A.6) family. SCNN1B subfamily. Component of the heterotrimeric epithelial sodium channel (ENaC) composed of an alpha/SCNN1A, a beta/SCNN1B and a gamma/SCNN1G subunit. An additional delta/SCNN1D subunit can replace the alpha/SCNN1A subunit to form an alternative channel with specific properties. Interacts with WWP1 (via WW domains). Interacts with WWP2 (via WW domains); inhibits the channel. Interacts with the full-length immature form of PCSK9 (pro-PCSK9). Interacts (N-glycosylated) with BPIFA1; the interaction is direct and inhibits the proteolytic processing of SCNN1A and SCNN1G and the activation of ENaC. Post-translationally, ubiquitinated. Can be ubiquitinated at multiple sites and undergo monoubiquitination and polyubiquitination. Ubiquitination by NEDD4 or NEDD4L inhibits the ENaC channel through endocytosis, intracellular retention and degradation of its individual subunits. However, some studies could not confirm the ubiquitination of this subunit of the ENaC. Phosphorylated on serine and threonine residues. Aldosterone and insulin increase the basal level of phosphorylation. In terms of processing, N-glycosylated. N-glycosylation is required for interaction with BPIFA1.

Its subcellular location is the apical cell membrane. The protein resides in the cytoplasmic vesicle membrane. It catalyses the reaction Na(+)(in) = Na(+)(out). Its activity is regulated as follows. Originally identified and characterized by its inhibition by the diuretic drug amiloride. This is one of the three pore-forming subunits of the heterotrimeric epithelial sodium channel (ENaC), a critical regulator of sodium balance and fluid homeostasis. ENaC operates in epithelial tissues, where it mediates the electrodiffusion of sodium ions from extracellular fluid through the apical membrane of cells, with water following osmotically. It plays a key role in maintaining sodium homeostasis through electrogenic sodium reabsorption in the kidneys. Additionally, ENaC is essential for airway surface liquid homeostasis, which is crucial for proper mucus clearance. This is Epithelial sodium channel subunit beta from Pan troglodytes (Chimpanzee).